The chain runs to 102 residues: UPF0328 protein ECU10_1820 (102 aa).

It belongs to the UPF0328 family.

The sequence is that of UPF0328 protein ECU10_1820 from Encephalitozoon cuniculi (strain GB-M1) (Microsporidian parasite).